A 337-amino-acid polypeptide reads, in one-letter code: Phenylalanine--tRNA ligase alpha subunit (337 aa).

E258 is a binding site for Mg(2+).

Belongs to the class-II aminoacyl-tRNA synthetase family. Phe-tRNA synthetase alpha subunit type 1 subfamily. As to quaternary structure, tetramer of two alpha and two beta subunits. The cofactor is Mg(2+).

It localises to the cytoplasm. The catalysed reaction is tRNA(Phe) + L-phenylalanine + ATP = L-phenylalanyl-tRNA(Phe) + AMP + diphosphate + H(+). This chain is Phenylalanine--tRNA ligase alpha subunit, found in Paraburkholderia phytofirmans (strain DSM 17436 / LMG 22146 / PsJN) (Burkholderia phytofirmans).